The following is a 184-amino-acid chain: Acireductone dioxygenase 4 (184 aa).

Fe(2+)-binding residues include H86, H88, E92, and H131. Ni(2+) is bound by residues H86, H88, E92, and H131.

It belongs to the acireductone dioxygenase (ARD) family. Fe(2+) serves as cofactor. Requires Ni(2+) as cofactor.

The protein resides in the cytoplasm. It localises to the nucleus. The catalysed reaction is 1,2-dihydroxy-5-(methylsulfanyl)pent-1-en-3-one + O2 = 4-methylsulfanyl-2-oxobutanoate + formate + 2 H(+). It carries out the reaction 1,2-dihydroxy-5-(methylsulfanyl)pent-1-en-3-one + O2 = 3-(methylsulfanyl)propanoate + CO + formate + 2 H(+). Its pathway is amino-acid biosynthesis; L-methionine biosynthesis via salvage pathway; L-methionine from S-methyl-5-thio-alpha-D-ribose 1-phosphate: step 5/6. Its function is as follows. Catalyzes 2 different reactions between oxygen and the acireductone 1,2-dihydroxy-3-keto-5-methylthiopentene (DHK-MTPene) depending upon the metal bound in the active site. Fe-containing acireductone dioxygenase (Fe-ARD) produces formate and 2-keto-4-methylthiobutyrate (KMTB), the alpha-ketoacid precursor of methionine in the methionine recycle pathway. Ni-containing acireductone dioxygenase (Ni-ARD) produces methylthiopropionate, carbon monoxide and formate, and does not lie on the methionine recycle pathway. The protein is Acireductone dioxygenase 4 (ARD4) of Oryza sativa subsp. japonica (Rice).